Reading from the N-terminus, the 447-residue chain is Methylenetetrahydrofolate--tRNA-(uracil-5-)-methyltransferase TrmFO (447 aa).

9 to 14 (GGGLAG) contributes to the FAD binding site.

This sequence belongs to the MnmG family. TrmFO subfamily. The cofactor is FAD.

The protein resides in the cytoplasm. The enzyme catalyses uridine(54) in tRNA + (6R)-5,10-methylene-5,6,7,8-tetrahydrofolate + NADH + H(+) = 5-methyluridine(54) in tRNA + (6S)-5,6,7,8-tetrahydrofolate + NAD(+). It carries out the reaction uridine(54) in tRNA + (6R)-5,10-methylene-5,6,7,8-tetrahydrofolate + NADPH + H(+) = 5-methyluridine(54) in tRNA + (6S)-5,6,7,8-tetrahydrofolate + NADP(+). Catalyzes the folate-dependent formation of 5-methyl-uridine at position 54 (M-5-U54) in all tRNAs. The protein is Methylenetetrahydrofolate--tRNA-(uracil-5-)-methyltransferase TrmFO of Paramagnetospirillum magneticum (strain ATCC 700264 / AMB-1) (Magnetospirillum magneticum).